A 509-amino-acid chain; its full sequence is Probable Xaa-Pro aminopeptidase MAC_04092 (509 aa).

Mn(2+) contacts are provided by D273, D284, E437, and E478.

The protein belongs to the peptidase M24B family. It depends on Mn(2+) as a cofactor.

It carries out the reaction Release of any N-terminal amino acid, including proline, that is linked to proline, even from a dipeptide or tripeptide.. In terms of biological role, catalyzes the removal of a penultimate prolyl residue from the N-termini of peptides. The chain is Probable Xaa-Pro aminopeptidase MAC_04092 from Metarhizium acridum (strain CQMa 102).